Reading from the N-terminus, the 161-residue chain is Ribonuclease P protein component 2 (161 aa).

Belongs to the eukaryotic/archaeal RNase P protein component 2 family. Consists of a catalytic RNA component and at least 4-5 protein subunits.

It is found in the cytoplasm. It carries out the reaction Endonucleolytic cleavage of RNA, removing 5'-extranucleotides from tRNA precursor.. In terms of biological role, part of ribonuclease P, a protein complex that generates mature tRNA molecules by cleaving their 5'-ends. The chain is Ribonuclease P protein component 2 from Haloarcula marismortui (strain ATCC 43049 / DSM 3752 / JCM 8966 / VKM B-1809) (Halobacterium marismortui).